Consider the following 309-residue polypeptide: L-aminoadipate-semialdehyde dehydrogenase-phosphopantetheinyl transferase (309 aa).

CoA contacts are provided by residues R47, 86-91 (RTAKGK), and 108-111 (NISH). Mg(2+) contacts are provided by D129 and E181. 181-185 (ESFIK) contacts CoA. S258 carries the phosphoserine modification.

It belongs to the P-Pant transferase superfamily. AcpS family. Monomer. Mg(2+) is required as a cofactor. Detected in heart, skeletal muscle, placenta, testis, brain, pancreas, liver and kidney.

The protein resides in the cytoplasm. Its subcellular location is the cytosol. It carries out the reaction apo-[ACP] + CoA = holo-[ACP] + adenosine 3',5'-bisphosphate + H(+). The catalysed reaction is apo-[ACP] + acetyl-CoA = acetyl-[ACP] + adenosine 3',5'-bisphosphate + H(+). Functionally, catalyzes the post-translational modification of target proteins by phosphopantetheine. Can transfer the 4'-phosphopantetheine moiety from coenzyme A, regardless of whether the CoA is presented in the free thiol form or as an acetyl thioester, to a serine residue of a broad range of acceptors including the acyl carrier domain of FASN. This is L-aminoadipate-semialdehyde dehydrogenase-phosphopantetheinyl transferase (AASDHPPT) from Homo sapiens (Human).